The sequence spans 128 residues: Small ribosomal subunit protein bS6 (128 aa).

A disordered region spans residues 105–128 (AKVTEEEPVEAAPEAKVETTTEEE). Over residues 117–128 (PEAKVETTTEEE) the composition is skewed to basic and acidic residues.

It belongs to the bacterial ribosomal protein bS6 family.

Functionally, binds together with bS18 to 16S ribosomal RNA. In Geotalea daltonii (strain DSM 22248 / JCM 15807 / FRC-32) (Geobacter daltonii), this protein is Small ribosomal subunit protein bS6.